A 320-amino-acid polypeptide reads, in one-letter code: ATP-dependent 6-phosphofructokinase (320 aa).

ATP is bound at residue Gly11. 21–25 (RAVTK) lines the ADP pocket. Residues 72–73 (RF) and 102–105 (GDGS) each bind ATP. Asp103 contacts Mg(2+). 125-127 (TID) contacts substrate. The active-site Proton acceptor is the Asp127. ADP is bound at residue Arg154. Substrate is bound by residues Arg162 and 169 to 171 (MGR). ADP is bound by residues 185–187 (GAD) and 213–215 (KDH). Substrate contacts are provided by residues Glu222, Arg243, and 249 to 252 (HMQR).

It belongs to the phosphofructokinase type A (PFKA) family. ATP-dependent PFK group I subfamily. Prokaryotic clade 'B1' sub-subfamily. Homotetramer. Mg(2+) serves as cofactor.

Its subcellular location is the cytoplasm. It carries out the reaction beta-D-fructose 6-phosphate + ATP = beta-D-fructose 1,6-bisphosphate + ADP + H(+). It participates in carbohydrate degradation; glycolysis; D-glyceraldehyde 3-phosphate and glycerone phosphate from D-glucose: step 3/4. With respect to regulation, allosterically activated by ADP and other diphosphonucleosides, and allosterically inhibited by phosphoenolpyruvate. In terms of biological role, catalyzes the phosphorylation of D-fructose 6-phosphate to fructose 1,6-bisphosphate by ATP, the first committing step of glycolysis. The sequence is that of ATP-dependent 6-phosphofructokinase from Lactobacillus helveticus (strain DPC 4571).